The chain runs to 92 residues: Small integral membrane protein 12 (92 aa).

The chain crosses the membrane as a helical span at residues 15-34 (YVTFPVAFVVGAVGYHLEWF).

This sequence belongs to the SMIM12 family.

The protein localises to the membrane. The sequence is that of Small integral membrane protein 12 (SMIM12) from Canis lupus familiaris (Dog).